The following is a 425-amino-acid chain: Enolase (425 aa).

Position 162 (glutamine 162) interacts with (2R)-2-phosphoglycerate. The Proton donor role is filled by glutamate 204. Mg(2+) is bound by residues aspartate 241, glutamate 284, and aspartate 311. Lysine 336, arginine 365, serine 366, and lysine 387 together coordinate (2R)-2-phosphoglycerate. The Proton acceptor role is filled by lysine 336.

Belongs to the enolase family. It depends on Mg(2+) as a cofactor.

Its subcellular location is the cytoplasm. It localises to the secreted. The protein resides in the cell surface. The enzyme catalyses (2R)-2-phosphoglycerate = phosphoenolpyruvate + H2O. It functions in the pathway carbohydrate degradation; glycolysis; pyruvate from D-glyceraldehyde 3-phosphate: step 4/5. Its function is as follows. Catalyzes the reversible conversion of 2-phosphoglycerate (2-PG) into phosphoenolpyruvate (PEP). It is essential for the degradation of carbohydrates via glycolysis. This Brucella melitensis biotype 2 (strain ATCC 23457) protein is Enolase.